The following is a 454-amino-acid chain: MSDQERGSENNNRSRSRSRSPVRRRMSDDHGYERDNHLSRRSGNYNGRRKFADTYRGSRDRGEYRGGRERSDYRERERFNNRDNPRSRDRYDDRRRGRDVTGRYGNRRDDYPRSFRSRHNTRDDSRRGGFGSSGARGDYGPLLARELDSTYEEKVNRNYSNSIFVGNLTYDSTPEDLTEFFSQIGKVVRADIITSRGHHRGMGTVEFTNSDDVDRAIRQYDGAFFMDRKIFVRQDNPPPSNNIKERKALDRGELRHNRKTHEVIVKNLPASVNWQALKDIFKECGNVAHADVELDGDGVSTGSGTVSFYDIKDLHRAIEKYNGYSIEGNVLDVKSKESVHNHSDGDDVDIPMDDSPVNEEARKFTENVVGGGERNRLIYCSNLPFSTAKSDLYDLFETIGKVNNAELRYDSKGAPTGIAVVEYDNVDDADVCIERLNNYNYGGCDLDISYAKRL.

Positions 1 to 141 (MSDQERGSEN…SSGARGDYGP (141 aa)) are disordered. Over residues 14–24 (SRSRSRSPVRR) the composition is skewed to basic residues. Basic and acidic residues-rich tracts occupy residues 25-38 (RMSD…DNHL) and 50-113 (KFAD…DYPR). Arginine 127 carries the post-translational modification Omega-N-methylarginine. RRM domains are found at residues 161–237 (NSIF…QDNP) and 261–338 (HEVI…SKES). Phosphoserine occurs at positions 338, 343, and 355. The RRM 3 domain maps to 376-453 (RLIYCSNLPF…CDLDISYAKR (78 aa)).

Post-translationally, methylated by HMT1.

It localises to the cytoplasm. The protein resides in the nucleus. Its subcellular location is the P-body. The protein localises to the stress granule. Its function is as follows. Binds to intron-containing transcripts and is involved in quality control for the export of spliced mRNAs from the nucleus. Binds to pre-mRNAs until splicing is completed or until faulty mRNAs are degraded. On correctly spliced mRNAs, GBP2 and HRB1 recruit MEX67 to allow nuclear export. On faulty mRNAs, GBP2 and HRB1 associate with the TRAMP complex that guides those pre-mRNAs to the exosome for degradation. The sequence is that of Serine/arginine (SR)-type shuttling mRNA binding protein HRB1 from Saccharomyces cerevisiae (strain ATCC 204508 / S288c) (Baker's yeast).